The following is a 352-amino-acid chain: Cyclin-O (352 aa).

The tract at residues 1-40 is disordered; the sequence is MVTPCPASPGSPAAGAGRRDSHQNLRAPVKKSRRPCLRRK. Residues 28 to 40 are compositionally biased toward basic residues; it reads PVKKSRRPCLRRK. Phosphoserine is present on Ser-83.

This sequence belongs to the cyclin family. As to expression, present in respiratory cells (at protein level). Expressed in multiciliated tissue in brain and fallopian tube (at protein level). Highly expressed in oocytes.

The protein resides in the cytoplasm. Its subcellular location is the nucleus. The protein localises to the nucleolus. Specifically required for generation of multiciliated cells, possibly by promoting a cell cycle state compatible with centriole amplification and maturation. Acts downstream of MCIDAS to promote mother centriole amplification and maturation in preparation for apical docking. May be involved in apoptosis in lymphoid cells; however, this result requires additional evidences in vivo. May be involved in oocyte meiotic resumption in oocytes. This is Cyclin-O from Mus musculus (Mouse).